We begin with the raw amino-acid sequence, 478 residues long: Patatin-like phospholipase domain-containing protein 2 (478 aa).

Residues 1–8 lie on the Cytoplasmic side of the membrane; it reads MFPRETKW. A helical membrane pass occupies residues 9–29; sequence NISFAGCGFLGVYHIGVASCL. The 170-residue stretch at 10–179 folds into the PNPLA domain; it reads ISFAGCGFLG…SDNLPLYELK (170 aa). A GXGXXG motif is present at residues 14–19; the sequence is GCGFLG. Over 30 to 42 the chain is Extracellular; that stretch reads REHAPFLVANATH. Residue N39 is glycosylated (N-linked (GlcNAc...) asparagine). Residues 43 to 63 form a helical membrane-spanning segment; the sequence is IYGASAGALTATALVTGACLG. Positions 45–49 match the GXSXG motif; the sequence is GASAG. Catalysis depends on S47, which acts as the Nucleophile. Over 64-137 the chain is Cytoplasmic; the sequence is EAGANIIEVS…IISHFSSKDE (74 aa). Residue K92 forms a Glycyl lysine isopeptide (Lys-Gly) (interchain with G-Cter in ubiquitin) linkage. The helical transmembrane segment at 138–158 threads the bilayer; sequence LIQANVCSTFIPVYCGLIPPT. At 159-323 the chain is on the extracellular side; the sequence is LQGVRYVDGG…TTLSNMLPVR (165 aa). D166 functions as the Proton acceptor in the catalytic mechanism. The DGA/G signature appears at 166 to 168; sequence DGG. A helical transmembrane segment spans residues 324–344; it reads LATAMMVPYTLPLESAVSFTI. Over 345 to 478 the chain is Cytoplasmic; the sequence is RLLEWLPDVP…PQDPSGLPPC (134 aa). A Phosphoserine; in vitro modification is found at S366. A Phosphoserine; by PKA modification is found at S388. S398 and S422 each carry phosphoserine. The segment at 456-478 is disordered; that stretch reads RAPASPTATDPATPQDPSGLPPC. Residues 457–478 show a composition bias toward low complexity; that stretch reads APASPTATDPATPQDPSGLPPC. The residue at position 460 (S460) is a Phosphoserine; in vitro.

Interacts with ABHD5; this association stimulates PNPLA2 triglyceride hydrolase activity. Interacts with SERPINF1; this interaction stimulates the phospholipase A2 activity of PNPLA2. Despite a colocalization in lipid droplets, it probably does not interact with PLIN. Interacts with PLIN5; prevents interaction with ABHD5. Interacts with FAF2. In terms of processing, phosphorylation at Ser-398 by PKA is increased during fasting and moderate intensity exercise, and moderately increases lipolytic activity. Post-translationally, ubiquitinated by PEX2 in response to reactive oxygen species (ROS), leading to its degradation. Ubiquitination is stimulated by LDAH.

The protein resides in the lipid droplet. Its subcellular location is the cell membrane. It localises to the cytoplasm. It carries out the reaction a triacylglycerol + H2O = a diacylglycerol + a fatty acid + H(+). It catalyses the reaction a triacylglycerol + H2O = a 1,2-diacylglycerol + a fatty acid + H(+). The catalysed reaction is a triacylglycerol + H2O = a 1,3-diacylglycerol + a fatty acid + H(+). The enzyme catalyses a triacyl-sn-glycerol + H2O = a 1,3-diacyl-sn-glycerol + a fatty acid + H(+). It carries out the reaction a triacyl-sn-glycerol + H2O = a 2,3-diacyl-sn-glycerol + a fatty acid + H(+). It catalyses the reaction a 1-acylglycerol + a 1,3-diacylglycerol = a triacylglycerol + glycerol. The catalysed reaction is a 1-acylglycerol + a 1,2-diacylglycerol = a triacylglycerol + glycerol. The enzyme catalyses 2 a 1-acylglycerol = a 1,2-diacylglycerol + glycerol. It carries out the reaction a triacylglycerol + all-trans-retinol = an all-trans-retinyl ester + a diacylglycerol. It catalyses the reaction 1,2-di-(9Z-octadecenoyl)-glycerol + (9Z)-octadecenoate + H(+) = 1,2,3-tri-(9Z-octadecenoyl)-glycerol + H2O. The catalysed reaction is 1,2,3-tri-(9Z-octadecenoyl)-glycerol + H2O = 1,3-di-(9Z-octadecenoyl)-glycerol + (9Z)-octadecenoate + H(+). The enzyme catalyses 1-(9Z-octadecenoyl)-glycerol + 1,3-di-(9Z-octadecenoyl)-glycerol = 1,2,3-tri-(9Z-octadecenoyl)-glycerol + glycerol. It carries out the reaction 1-(9Z-octadecenoyl)-glycerol + 1,2-di-(9Z-octadecenoyl)-glycerol = 1,2,3-tri-(9Z-octadecenoyl)-glycerol + glycerol. It catalyses the reaction 2 1-(9Z-octadecenoyl)-glycerol = 1,2-di-(9Z-octadecenoyl)-glycerol + glycerol. The catalysed reaction is 1,2,3-tri-(9Z-octadecenoyl)-glycerol + all-trans-retinol = all-trans-retinyl 9Z-octadecenoate + di-(9Z)-octadecenoylglycerol. The enzyme catalyses 1,2,3-tri-(9Z)-hexadecenoylglycerol + H2O = 1,3-di-(9Z)-hexadecenoylglycerol + (9Z)-hexadecenoate + H(+). It carries out the reaction 1,2,3-tri-(9Z,12Z)-octadecadienoylglycerol + H2O = 1,3-di-(9Z,12Z)-octadecadienoylglycerol + (9Z,12Z)-octadecadienoate + H(+). It catalyses the reaction 1,2,3-tri-(9Z,12Z,15Z)-octadecatrienoylglycerol + H2O = 1,3-di-(9Z,12Z,15Z)-octadecatrienoylglycerol + (9Z,12Z,15Z)-octadecatrienoate + H(+). The catalysed reaction is 1,3-di-(9Z)-octadecenoyl-2-hexadecanoylglycerol + H2O = 1,3-di-(9Z-octadecenoyl)-glycerol + hexadecanoate + H(+). The enzyme catalyses 1,2-di-(9Z)-octadecenoyl-3-hexadecanoyl-sn-glycerol + H2O = 1-(9Z)-octadecenoyl-3-hexadecanoyl-sn-glycerol + (9Z)-octadecenoate + H(+). It carries out the reaction 1-hexadecanoyl-2,3-di-(9Z)-octadecenoyl-sn-glycerol + H2O = 1-hexadecanoyl-3-(9Z)-octadecenoyl-sn-glycerol + (9Z)-octadecenoate + H(+). It catalyses the reaction 1,2,3-tri-(9Z-octadecenoyl)-glycerol + H2O = 2,3-di-(9Z)-octadecenoyl-sn-glycerol + (9Z)-octadecenoate + H(+). The catalysed reaction is 1,2,3-tri-(9Z)-hexadecenoylglycerol + H2O = 2,3-di-(9Z)-hexadecenoyl-sn-glycerol + (9Z)-hexadecenoate + H(+). The enzyme catalyses 1,2,3-tri-(9Z,12Z)-octadecadienoylglycerol + H2O = 2,3-di-(9Z,12Z)-octadecadienoyl-sn-glycerol + (9Z,12Z)-octadecadienoate + H(+). It carries out the reaction 1,2,3-tri-(9Z,12Z,15Z)-octadecatrienoylglycerol + H2O = 2,3-di-(9Z,12Z,15Z)-octadecatrienoyl-sn-glycerol + (9Z,12Z,15Z)-octadecatrienoate + H(+). It catalyses the reaction 1,3-di-(9Z)-octadecenoyl-2-hexadecanoylglycerol + H2O = 2-hexadecanoyl-3-(9Z)-octadecenoyl-sn-glycerol + (9Z)-octadecenoate + H(+). The catalysed reaction is 1-hexadecanoyl-2,3-di-(9Z)-octadecenoyl-sn-glycerol + H2O = 2,3-di-(9Z)-octadecenoyl-sn-glycerol + hexadecanoate + H(+). The enzyme catalyses 1,2-di-(9Z)-octadecenoyl-3-hexadecanoyl-sn-glycerol + H2O = 2-(9Z-octadecenoyl)-3-hexadecanoyl-sn-glycerol + (9Z)-octadecenoate + H(+). It carries out the reaction a 1,2-diacyl-sn-glycero-3-phosphocholine + H2O = a 1-acyl-sn-glycero-3-phosphocholine + a fatty acid + H(+). It catalyses the reaction 1,2,3-tri-(9Z-octadecenoyl)-glycerol + 9-hydroxy-octadecanoate = 9-(9Z-octadecenoyloxy)-octadecanoate + 2,3-di-(9Z)-octadecenoyl-sn-glycerol. The catalysed reaction is 1-hexadecanoyl-2,3-di-(9Z)-octadecenoyl-sn-glycerol + 9-hydroxy-octadecanoate = 9-hexadecanoyloxy-octadecanoate + 2,3-di-(9Z)-octadecenoyl-sn-glycerol. The enzyme catalyses 1,2,3-tri-(10Z)-heptadecenoylglycerol + 9-hydroxy-octadecanoate = 2,3-di-(10Z-heptadecenoyl)-sn-glycerol + 9-(10Z-heptadecenoyloxy)-octadecanoate. It carries out the reaction 1,2,3-tri-(9Z,12Z)-octadecadienoylglycerol + 9-hydroxy-octadecanoate = 2,3-di-(9Z,12Z)-octadecadienoyl-sn-glycerol + 9-(9Z,12Z-octadecadienoyloxy)-octadecanoate. It catalyses the reaction 1,2,3-tri-(9Z)-hexadecenoylglycerol + 9-hydroxy-octadecanoate = 2,3-di-(9Z)-hexadecenoyl-sn-glycerol + 9-(9Z-hexadecenoyloxy)-octadecanoate. The catalysed reaction is 9-hydroxy-octadecanoate + 1,2-di-(9Z-octadecenoyl)-sn-glycerol = 9-(9Z-octadecenoyloxy)-octadecanoate + 2-(9Z-octadecenoyl)-glycerol. The enzyme catalyses 1-hexadecanoyl-2,3-di-(9Z)-octadecenoyl-sn-glycerol + 9-hydroxy-octadecanoate = 1-hexadecanoyl-3-(9Z)-octadecenoyl-sn-glycerol + 9-(9Z-octadecenoyloxy)-octadecanoate. It functions in the pathway glycerolipid metabolism; triacylglycerol degradation. Catalyzes the initial step in triglyceride hydrolysis in adipocyte and non-adipocyte lipid droplets. Exhibits a strong preference for the hydrolysis of long-chain fatty acid esters at the sn-2 position of the glycerol backbone and acts coordinately with LIPE/HLS and DGAT2 within the lipolytic cascade. Also possesses acylglycerol transacylase and phospholipase A2 activities. Transfers fatty acid from triglyceride to retinol, hydrolyzes retinylesters, and generates 1,3-diacylglycerol from triglycerides. Regulates adiposome size and may be involved in the degradation of adiposomes. Catalyzes the formation of an ester bond between hydroxy fatty acids and fatty acids derived from triglycerides or diglycerides to generate fatty acid esters of hydroxy fatty acids (FAHFAs) in adipocytes. Acts antagonistically with LDAH in regulation of cellular lipid stores. Inhibits LDAH-stimulated lipid droplet fusion. May play an important role in energy homeostasis. May play a role in the response of the organism to starvation, enhancing hydrolysis of triglycerides and providing free fatty acids to other tissues to be oxidized in situations of energy depletion. This is Patatin-like phospholipase domain-containing protein 2 from Rattus norvegicus (Rat).